A 597-amino-acid chain; its full sequence is Aspartate--tRNA(Asp/Asn) ligase (597 aa).

Glu-175 serves as a coordination point for L-aspartate. The tract at residues 199 to 202 is aspartate; it reads QQYK. L-aspartate-binding residues include Arg-221 and His-456. An ATP-binding site is contributed by 221–223; the sequence is RDE. Glu-490 serves as a coordination point for ATP. Arg-497 is an L-aspartate binding site. 542–545 contributes to the ATP binding site; that stretch reads GVDR.

This sequence belongs to the class-II aminoacyl-tRNA synthetase family. Type 1 subfamily. As to quaternary structure, homodimer.

It is found in the cytoplasm. It carries out the reaction tRNA(Asx) + L-aspartate + ATP = L-aspartyl-tRNA(Asx) + AMP + diphosphate. Functionally, aspartyl-tRNA synthetase with relaxed tRNA specificity since it is able to aspartylate not only its cognate tRNA(Asp) but also tRNA(Asn). Reaction proceeds in two steps: L-aspartate is first activated by ATP to form Asp-AMP and then transferred to the acceptor end of tRNA(Asp/Asn). The chain is Aspartate--tRNA(Asp/Asn) ligase from Beijerinckia indica subsp. indica (strain ATCC 9039 / DSM 1715 / NCIMB 8712).